Consider the following 131-residue polypeptide: Calvin cycle protein CP12-2, chloroplastic (131 aa).

The transit peptide at 1 to 53 directs the protein to the chloroplast; that stretch reads MATIATGLNIATQRVFVTSENRPVCLAGPVHLNNSWNLGSRTTNRMMKLQPIK. 2 cysteine pairs are disulfide-bonded: C75/C84 and C117/C126. Residues 97 to 131 are disordered; sequence AASHARDKKKADGSDPLEEYCKDNPETNECRTYDN. Over residues 105-131 the composition is skewed to basic and acidic residues; the sequence is KKADGSDPLEEYCKDNPETNECRTYDN.

It belongs to the CP12 family. Monomer. Component of a complex that contains two dimers of PRK, two tetramers of GAPDH and CP12. CP12 associates with GAPDH, causing its conformation to change. This GAPDH/CP12 complex binds PRK to form a half-complex (one unit). This unit probably dimerizes due partially to interactions between the enzymes of each unit. Post-translationally, contains two disulfide bonds; only the oxidized protein, with two disulfide bonds, is active in complex formation. The C-terminal disulfide is involved in the interaction with GAPDH and the N-terminal disulfide mediates the binding of PRK with this binary complex. In terms of tissue distribution, mostly expressed in cotyledons, leaves and flower stalks, and, to a lower extent, in flowers and stems. Barely detectable in roots and siliques.

Its subcellular location is the plastid. It is found in the chloroplast. Functionally, acts as a linker essential in the assembly of a core complex of PRK/GAPDH. Coordinates the reversible inactivation of chloroplast enzymes GAPDH and PRK during darkness in photosynthetic tissues. The chain is Calvin cycle protein CP12-2, chloroplastic (CP12-2) from Arabidopsis thaliana (Mouse-ear cress).